The sequence spans 229 residues: Ras-related protein rab-39 (229 aa).

A GTP-binding site is contributed by 73–77 (DTAGQ). S-geranylgeranyl cysteine attachment occurs at residues C227 and C229. At C229 the chain carries Cysteine methyl ester.

The protein belongs to the small GTPase superfamily. Rab family. In terms of assembly, interacts (in GTP-bound form) with Ras association domain-containing protein rsf-1.

The protein localises to the cell membrane. It is found in the cytoplasmic vesicle membrane. It localises to the golgi apparatus. In terms of biological role, small GTPases Rab involved in autophagy. The small GTPases Rab are key regulators of intracellular membrane trafficking, from the formation of transport vesicles to their fusion with membranes. Rabs cycle between an inactive GDP-bound form and an active GTP-bound form that is able to recruit to membranes different sets of downstream effectors directly responsible for vesicle formation, movement, tethering and fusion. Involved in positively regulating the oxidative stress response, perhaps in concert with the Ras association domain-containing protein rsf-1. In Caenorhabditis elegans, this protein is Ras-related protein rab-39.